We begin with the raw amino-acid sequence, 85 residues long: Probable small nuclear ribonucleoprotein G (85 aa).

The Sm domain occupies 6–78; sequence QADPDLTKLL…ILLMEPLESM (73 aa).

Belongs to the snRNP Sm proteins family. As to quaternary structure, core component of the spliceosomal U1, U2, U4 and U5 small nuclear ribonucleoproteins (snRNPs), the building blocks of the spliceosome. Most spliceosomal snRNPs contain a common set of Sm proteins, SNRPB, SNRPD1, SNRPD2, SNRPD3, SNRPE, SNRPF and SNRPG that assemble in a heptameric protein ring on the Sm site of the small nuclear RNA to form the core snRNP. Component of the U1 snRNP. Component of the U4/U6-U5 tri-snRNP complex. Component of the U7 snRNP complex. Component of the U11/U12 snRNPs that are part of the U12-type spliceosome.

It localises to the cytoplasm. Its subcellular location is the cytosol. It is found in the nucleus. Functionally, plays a role in pre-mRNA splicing as a core component of the spliceosomal U1, U2, U4 and U5 small nuclear ribonucleoproteins (snRNPs), the building blocks of the spliceosome. Component of both the pre-catalytic spliceosome B complex and activated spliceosome C complexes. Is also a component of the minor U12 spliceosome. This Dictyostelium discoideum (Social amoeba) protein is Probable small nuclear ribonucleoprotein G (snrpG).